A 296-amino-acid chain; its full sequence is NAD kinase (296 aa).

Residue Asp74 is the Proton acceptor of the active site. Residues 74–75 (DG), 148–149 (ND), Arg176, Asp178, and 189–194 (TAYALS) contribute to the NAD(+) site.

The protein belongs to the NAD kinase family. A divalent metal cation is required as a cofactor.

The protein localises to the cytoplasm. The enzyme catalyses NAD(+) + ATP = ADP + NADP(+) + H(+). Involved in the regulation of the intracellular balance of NAD and NADP, and is a key enzyme in the biosynthesis of NADP. Catalyzes specifically the phosphorylation on 2'-hydroxyl of the adenosine moiety of NAD to yield NADP. This Nitrosomonas europaea (strain ATCC 19718 / CIP 103999 / KCTC 2705 / NBRC 14298) protein is NAD kinase.